The following is a 156-amino-acid chain: Small ribosomal subunit protein uS7 (156 aa).

It belongs to the universal ribosomal protein uS7 family. In terms of assembly, part of the 30S ribosomal subunit. Contacts proteins S9 and S11.

Functionally, one of the primary rRNA binding proteins, it binds directly to 16S rRNA where it nucleates assembly of the head domain of the 30S subunit. Is located at the subunit interface close to the decoding center, probably blocks exit of the E-site tRNA. This Pseudomonas aeruginosa (strain LESB58) protein is Small ribosomal subunit protein uS7.